The sequence spans 514 residues: tRNA-2-methylthio-N(6)-dimethylallyladenosine synthase (514 aa).

A disordered region spans residues 1-21; it reads MNEEQRKASSVDVLAERDKKA. One can recognise an MTTase N-terminal domain in the interval 68 to 186; it reads RTFLIKTYGC…LPEILEEAYL (119 aa). Cys77, Cys113, Cys147, Cys223, Cys227, and Cys230 together coordinate [4Fe-4S] cluster. In terms of domain architecture, Radical SAM core spans 209-440; that stretch reads REGNIKAWVN…KKVGHYSQIA (232 aa). The 64-residue stretch at 442-505 folds into the TRAM domain; sequence SKYEGQTVTV…QYSLNGSFVK (64 aa).

Belongs to the methylthiotransferase family. MiaB subfamily. In terms of assembly, monomer. [4Fe-4S] cluster is required as a cofactor.

It localises to the cytoplasm. The enzyme catalyses N(6)-dimethylallyladenosine(37) in tRNA + (sulfur carrier)-SH + AH2 + 2 S-adenosyl-L-methionine = 2-methylsulfanyl-N(6)-dimethylallyladenosine(37) in tRNA + (sulfur carrier)-H + 5'-deoxyadenosine + L-methionine + A + S-adenosyl-L-homocysteine + 2 H(+). In terms of biological role, catalyzes the methylthiolation of N6-(dimethylallyl)adenosine (i(6)A), leading to the formation of 2-methylthio-N6-(dimethylallyl)adenosine (ms(2)i(6)A) at position 37 in tRNAs that read codons beginning with uridine. The chain is tRNA-2-methylthio-N(6)-dimethylallyladenosine synthase from Staphylococcus aureus (strain MRSA252).